The chain runs to 95 residues: Large ribosomal subunit protein eL31 (95 aa).

The protein belongs to the eukaryotic ribosomal protein eL31 family. Part of the 50S ribosomal subunit.

This chain is Large ribosomal subunit protein eL31, found in Pyrococcus furiosus (strain ATCC 43587 / DSM 3638 / JCM 8422 / Vc1).